Reading from the N-terminus, the 282-residue chain is Bis(5'-nucleosyl)-tetraphosphatase, symmetrical (282 aa).

This sequence belongs to the Ap4A hydrolase family.

It carries out the reaction P(1),P(4)-bis(5'-adenosyl) tetraphosphate + H2O = 2 ADP + 2 H(+). Its function is as follows. Hydrolyzes diadenosine 5',5'''-P1,P4-tetraphosphate to yield ADP. This is Bis(5'-nucleosyl)-tetraphosphatase, symmetrical from Burkholderia pseudomallei (strain 1106a).